The sequence spans 199 residues: ATP-dependent Clp protease proteolytic subunit (199 aa).

Catalysis depends on serine 97, which acts as the Nucleophile. Residue histidine 122 is part of the active site.

This sequence belongs to the peptidase S14 family. In terms of assembly, fourteen ClpP subunits assemble into 2 heptameric rings which stack back to back to give a disk-like structure with a central cavity, resembling the structure of eukaryotic proteasomes.

It is found in the cytoplasm. It carries out the reaction Hydrolysis of proteins to small peptides in the presence of ATP and magnesium. alpha-casein is the usual test substrate. In the absence of ATP, only oligopeptides shorter than five residues are hydrolyzed (such as succinyl-Leu-Tyr-|-NHMec, and Leu-Tyr-Leu-|-Tyr-Trp, in which cleavage of the -Tyr-|-Leu- and -Tyr-|-Trp bonds also occurs).. In terms of biological role, cleaves peptides in various proteins in a process that requires ATP hydrolysis. Has a chymotrypsin-like activity. Plays a major role in the degradation of misfolded proteins. The sequence is that of ATP-dependent Clp protease proteolytic subunit from Geobacter sulfurreducens (strain ATCC 51573 / DSM 12127 / PCA).